A 1293-amino-acid polypeptide reads, in one-letter code: DNA-directed RNA polymerase subunit beta' (1293 aa).

Cysteine 60, cysteine 62, cysteine 75, and cysteine 78 together coordinate Zn(2+). Residues aspartate 535, aspartate 537, and aspartate 539 each coordinate Mg(2+). Positions 877, 953, 960, and 963 each coordinate Zn(2+).

The protein belongs to the RNA polymerase beta' chain family. The RNAP catalytic core consists of 2 alpha, 1 beta, 1 beta' and 1 omega subunit. When a sigma factor is associated with the core the holoenzyme is formed, which can initiate transcription. The cofactor is Mg(2+). It depends on Zn(2+) as a cofactor.

It catalyses the reaction RNA(n) + a ribonucleoside 5'-triphosphate = RNA(n+1) + diphosphate. DNA-dependent RNA polymerase catalyzes the transcription of DNA into RNA using the four ribonucleoside triphosphates as substrates. The polypeptide is DNA-directed RNA polymerase subunit beta' (Kineococcus radiotolerans (strain ATCC BAA-149 / DSM 14245 / SRS30216)).